Here is a 189-residue protein sequence, read N- to C-terminus: Flavin prenyltransferase UbiX (189 aa).

Residues 10-12, Ser-37, 88-91, and Arg-123 contribute to the FMN site; these read GAS and SIKT. Tyr-153 and Arg-169 together coordinate dimethylallyl phosphate.

Belongs to the UbiX/PAD1 family.

It carries out the reaction dimethylallyl phosphate + FMNH2 = prenylated FMNH2 + phosphate. Its pathway is cofactor biosynthesis; ubiquinone biosynthesis. Its function is as follows. Flavin prenyltransferase that catalyzes the synthesis of the prenylated FMN cofactor (prenyl-FMN) for 4-hydroxy-3-polyprenylbenzoic acid decarboxylase UbiD. The prenyltransferase is metal-independent and links a dimethylallyl moiety from dimethylallyl monophosphate (DMAP) to the flavin N5 and C6 atoms of FMN. This is Flavin prenyltransferase UbiX from Salmonella typhi.